The primary structure comprises 242 residues: Zinc-finger homeodomain protein 13 (242 aa).

Residues 64-111 (YYECRKNHAADIGTTAYDGCGEFVSSTGEEDSLNCAACGCHRNFHREE) form a ZF-HD dimerization-type; degenerate zinc finger. The disordered stretch occupies residues 144 to 166 (GGKSEGKKKKKEKESYGGDPIIK). A compositionally biased stretch (basic and acidic residues) spans 155 to 166 (EKESYGGDPIIK). The segment at residues 179–238 (VKRLKTKFTAEQTEKMRDYAEKLRWKVRPERQEEVEEFCVEIGVNRKNFRIWMNNHKDKI) is a DNA-binding region (homeobox).

As to quaternary structure, homo- and heterodimer with other ZFHD proteins. Interacts with MIF1, MIF2 and MIF3; these interactions prevent nuclear localization and DNA-binding to inhibit transcription regulation activity. Binds to ZHD11. In terms of tissue distribution, mostly expressed in flowers.

It localises to the nucleus. Putative transcription factor. This Arabidopsis thaliana (Mouse-ear cress) protein is Zinc-finger homeodomain protein 13 (ZHD13).